The sequence spans 287 residues: ATP synthase gamma chain (287 aa).

This sequence belongs to the ATPase gamma chain family. As to quaternary structure, F-type ATPases have 2 components, CF(1) - the catalytic core - and CF(0) - the membrane proton channel. CF(1) has five subunits: alpha(3), beta(3), gamma(1), delta(1), epsilon(1). CF(0) has three main subunits: a, b and c.

It localises to the cell inner membrane. Its function is as follows. Produces ATP from ADP in the presence of a proton gradient across the membrane. The gamma chain is believed to be important in regulating ATPase activity and the flow of protons through the CF(0) complex. The chain is ATP synthase gamma chain from Xylella fastidiosa (strain 9a5c).